The sequence spans 137 residues: ATP synthase epsilon chain, chloroplastic (137 aa).

The protein belongs to the ATPase epsilon chain family. F-type ATPases have 2 components, CF(1) - the catalytic core - and CF(0) - the membrane proton channel. CF(1) has five subunits: alpha(3), beta(3), gamma(1), delta(1), epsilon(1). CF(0) has three main subunits: a, b and c.

It localises to the plastid. The protein resides in the chloroplast thylakoid membrane. In terms of biological role, produces ATP from ADP in the presence of a proton gradient across the membrane. The protein is ATP synthase epsilon chain, chloroplastic of Pisum sativum (Garden pea).